Reading from the N-terminus, the 169-residue chain is MDLNAIRILGLDPGLRRTGWGVIDVTGSRLAFVACGTILPPEQAPMGERLAHLHRELLGVIERFSPQEAAVEETFVNMNPSSTLKLGQARGVVLLAPAQMGLPVAEYAALLVKKSVVGAGRAEKAQVRMMIGILLPKATPETEDASDALAVAVTHAHHRGAAARARAAL.

Residues D12, E72, and D144 contribute to the active site. Residues D12, E72, and D144 each contribute to the Mg(2+) site.

Belongs to the RuvC family. Homodimer which binds Holliday junction (HJ) DNA. The HJ becomes 2-fold symmetrical on binding to RuvC with unstacked arms; it has a different conformation from HJ DNA in complex with RuvA. In the full resolvosome a probable DNA-RuvA(4)-RuvB(12)-RuvC(2) complex forms which resolves the HJ. Mg(2+) is required as a cofactor.

It is found in the cytoplasm. The catalysed reaction is Endonucleolytic cleavage at a junction such as a reciprocal single-stranded crossover between two homologous DNA duplexes (Holliday junction).. Functionally, the RuvA-RuvB-RuvC complex processes Holliday junction (HJ) DNA during genetic recombination and DNA repair. Endonuclease that resolves HJ intermediates. Cleaves cruciform DNA by making single-stranded nicks across the HJ at symmetrical positions within the homologous arms, yielding a 5'-phosphate and a 3'-hydroxyl group; requires a central core of homology in the junction. The consensus cleavage sequence is 5'-(A/T)TT(C/G)-3'. Cleavage occurs on the 3'-side of the TT dinucleotide at the point of strand exchange. HJ branch migration catalyzed by RuvA-RuvB allows RuvC to scan DNA until it finds its consensus sequence, where it cleaves and resolves the cruciform DNA. The protein is Crossover junction endodeoxyribonuclease RuvC of Xanthobacter autotrophicus (strain ATCC BAA-1158 / Py2).